The primary structure comprises 1163 residues: Leptin receptor (1163 aa).

The signal sequence occupies residues 1 to 21 (MICQKFCVVLLHWEFICVITA). Over 22 to 837 (FNLSYPITPW…QDNTEKHQND (816 aa)) the chain is Extracellular. Residues N23, N41, N56, N71, N79, N96, and N114 are each glycosylated (N-linked (GlcNAc...) asparagine). 2 disulfide bridges follow: C37-C88 and C87-C97. 2 disulfide bridges follow: C129-C140 and C184-C194. 5 N-linked (GlcNAc...) asparagine glycosylation sites follow: N185, N204, N274, N345, and N395. Residues 237–331 (PPLGLRMEIT…TPHVFTTQDV (95 aa)) form the Fibronectin type-III 1 domain. Intrachain disulfides connect C350–C410 and C411–C416. Residue N431 is glycosylated (N-linked (GlcNAc...) asparagine). Disulfide bonds link C434–C445, C471–C526, and C486–C496. The interval 465 to 482 (RRSSLYCFDIPSIHPISK) is leptin-binding. Fibronectin type-III domains lie at 537–632 (PPSS…TVVM), 637–730 (PMRG…LTFS), and 738–831 (IVQS…QDNT). The WSXWS motif signature appears at 620–624 (WSNWS). N622, N657, N668, N686, N695, N726, and N748 each carry an N-linked (GlcNAc...) asparagine glycan. A helical transmembrane segment spans residues 838 to 860 (AGLYVIVPVIISSSILLLGTLLI). At 861 to 1163 (LHQRMKKLFW…MENKMCDLTV (303 aa)) the chain is on the cytoplasmic side. A Box 1 motif motif is present at residues 869–877 (FWEDVPNPK). Position 880 is a phosphoserine (S880). Residues 891-896 (ETFEHL) are required for JAK2 activation. Residues 896–904 (LFIKHTASV) form a required for STAT3 phosphorylation region. A Phosphotyrosine; by JAK2 modification is found at Y984. Y1077 is modified (phosphotyrosine). Y1139 carries the post-translational modification Phosphotyrosine; by JAK2.

This sequence belongs to the type I cytokine receptor family. Type 2 subfamily. In terms of assembly, present as a mixture of monomers and dimers. The phosphorylated receptor binds a number of SH2 domain-containing proteins such as JAK2, STAT3, PTPN11, and SOCS3. Interaction with SOCS3 inhibits JAK/STAT signaling and MAPK cascade. On ligand binding, phosphorylated on two conserved C-terminal tyrosine residues (isoform B only) by JAK2. Tyr-984 is required for complete binding and activation of PTPN11, ERK/FOS activation and, for interaction with SOCS3. Phosphorylation on Tyr-1139 is required for STAT3 binding/activation. In terms of processing, on ligand binding, phosphorylated on two conserved C-terminal tyrosine residues (isoform B only) by JAK2. Tyr-984 is required for complete binding and activation of PTPN11, ERK/FOS activation,for interaction with SOCS3 and SOCS3 mediated inhibition of leptin signaling. Phosphorylation on Tyr-1139 is required for STAT3 binding/activation. Phosphorylation of Tyr-1077 has a more accessory role. In terms of tissue distribution, widely expressed. High expression of isoform B in liver, adipose tissue, hypothalamus and choroid plexus.

It is found in the cell membrane. The protein resides in the basolateral cell membrane. In terms of biological role, receptor for hormone LEP/leptin. On ligand binding, mediates LEP central and peripheral effects through the activation of different signaling pathways such as JAK2/STAT3 and MAPK cascade/FOS. In the hypothalamus, LEP acts as an appetite-regulating factor that induces a decrease in food intake and an increase in energy consumption by inducing anorexinogenic factors and suppressing orexigenic neuropeptides, also regulates bone mass and secretion of hypothalamo-pituitary-adrenal hormones. In the periphery, increases basal metabolism, influences reproductive function, regulates pancreatic beta-cell function and insulin secretion, is pro-angiogenic and affects innate and adaptive immunity. Control of energy homeostasis and melanocortin production (stimulation of POMC and full repression of AgRP transcription) is mediated by STAT3 signaling, whereas distinct signals regulate NPY and the control of fertility, growth and glucose homeostasis. Involved in the regulation of counter-regulatory response to hypoglycemia by inhibiting neurons of the parabrachial nucleus. Has a specific effect on T lymphocyte responses, differentially regulating the proliferation of naive and memory T-cells. Leptin increases Th1 and suppresses Th2 cytokine production. Functionally, may transport LEP across the blood-brain barrier. Binds LEP and mediates LEP endocytosis. Does not induce phosphorylation of and activate STAT3. The sequence is that of Leptin receptor (LEPR) from Macaca mulatta (Rhesus macaque).